Here is a 211-residue protein sequence, read N- to C-terminus: Protein-L-isoaspartate O-methyltransferase (211 aa).

The active site involves Ser-60.

It belongs to the methyltransferase superfamily. L-isoaspartyl/D-aspartyl protein methyltransferase family.

The protein localises to the cytoplasm. It catalyses the reaction [protein]-L-isoaspartate + S-adenosyl-L-methionine = [protein]-L-isoaspartate alpha-methyl ester + S-adenosyl-L-homocysteine. Functionally, catalyzes the methyl esterification of L-isoaspartyl residues in peptides and proteins that result from spontaneous decomposition of normal L-aspartyl and L-asparaginyl residues. It plays a role in the repair and/or degradation of damaged proteins. The sequence is that of Protein-L-isoaspartate O-methyltransferase from Hahella chejuensis (strain KCTC 2396).